The chain runs to 502 residues: Type II secretion system protein E (502 aa).

263–270 (GPTGSGKT) is a binding site for ATP. Zn(2+) contacts are provided by cysteine 396, cysteine 399, cysteine 429, and cysteine 432. The segment at 461-480 (SSEQEMTRHARTSGPSIRDD) is disordered.

Belongs to the GSP E family. Homodimer. Dimerization is directed by a relatively short domain near the extreme N-terminus and is essential for extracellular protein secretion. May form homooligomers. Interacts with XcpY/GspL. Forms an inner membrane platform subcomplex with XcpS/GspF, XcpY/GspL and XcpZ/GspM. The cofactor is Zn(2+).

The protein localises to the cell inner membrane. The enzyme catalyses ATP + H2O + cellular proteinSide 1 = ADP + phosphate + cellular proteinSide 2.. In terms of biological role, ATPase component of the type II secretion system required for the energy-dependent secretion of extracellular factors such as proteases and toxins from the periplasm. Acts as a molecular motor to provide the energy that is required for assembly of the pseudopilus and the extrusion of substrates generated in the cytoplasm. The chain is Type II secretion system protein E (xcpR) from Pseudomonas aeruginosa (strain ATCC 15692 / DSM 22644 / CIP 104116 / JCM 14847 / LMG 12228 / 1C / PRS 101 / PAO1).